The following is a 692-amino-acid chain: Junctophilin-2 (692 aa).

The Cytoplasmic portion of the chain corresponds to 1 to 670 (MSGGRFDFDD…EVEVEEVPNT (670 aa)). MORN repeat units lie at residues 14–36 (YCGG…KGQG), 38–59 (YSGS…SGNT), 60–79 (FEGY…TKGR), 82–104 (YKGE…NSGA), 106–128 (YEGT…DGGT), and 129–151 (YQGQ…PYGM). Phosphoserine occurs at positions 162 and 165. 2 disordered regions span residues 164 to 190 (SSLR…LPLP) and 246 to 273 (LSSG…AAPF). MORN repeat units lie at residues 285 to 307 (YMGE…SGLR) and 308 to 330 (YEGE…DGHR). A Bipartite nuclear localization signal motif is present at residues 345–359 (KRRVLPLKSNKVRQK). Positions 439 to 661 (NSESLLEPRE…KEVAQEAEAE (223 aa)) are disordered. A phosphoserine mark is found at Ser-440, Ser-442, and Ser-462. The span at 457–471 (ERPRESPQLHERETP) shows a compositional bias: basic and acidic residues. Position 470 is a phosphothreonine (Thr-470). The segment covering 474–487 (EGGPPSPAGTPPQP) has biased composition (pro residues). Ser-479 is subject to Phosphoserine. Thr-483 is subject to Phosphothreonine. The short motif at 488 to 492 (KRPRP) is the Nuclear localization signal element. 2 positions are modified to phosphoserine: Ser-527 and Ser-533. Residues 573 to 582 (PLEDEPEPEP) are compositionally biased toward acidic residues. 4 positions are modified to phosphoserine: Ser-589, Ser-593, Ser-604, and Ser-609. The span at 627-640 (AEPKAKARKTEARG) shows a compositional bias: basic and acidic residues. The helical; Anchor for type IV membrane protein transmembrane segment at 671-691 (VLICMVILLNIGLAILFVHLL) threads the bilayer.

The protein belongs to the junctophilin family. As to quaternary structure, interacts with TRPC3. Interacts with BAG5 and HSPA8; the interaction with HSPA8 is increased in the presence of BAG5. Junctophilin-2 N-terminal fragment: Interacts with MEF2C. In terms of processing, proteolytically cleaved by calpain in response to cardiac stress. The major cleavage site takes place at the C-terminus and leads to the release of the Junctophilin-2 N-terminal fragment chain (JP2NT). Post-translationally, phosphorylation on Ser-165, probably by PKC, affects RYR1-mediated calcium ion release, interaction with TRPC3, and skeletal muscle myotubule development.

Its subcellular location is the cell membrane. The protein resides in the sarcoplasmic reticulum membrane. It localises to the endoplasmic reticulum membrane. The protein localises to the nucleus. Functionally, membrane-binding protein that provides a structural bridge between the plasma membrane and the sarcoplasmic reticulum and is required for normal excitation-contraction coupling in cardiomyocytes. Provides a structural foundation for functional cross-talk between the cell surface and intracellular Ca(2+) release channels by maintaining the 12-15 nm gap between the sarcolemma and the sarcoplasmic reticulum membranes in the cardiac dyads. Necessary for proper intracellular Ca(2+) signaling in cardiac myocytes via its involvement in ryanodine receptor-mediated calcium ion release. Contributes to the construction of skeletal muscle triad junctions. Transcription repressor required to safeguard against the deleterious effects of cardiac stress. Generated following cleavage of the Junctophilin-2 chain by calpain in response to cardiac stress in cardiomyocytes. Following cleavage and release from the membrane, translocates to the nucleus, binds DNA and represses expression of genes implicated in cell growth and differentiation, hypertrophy, inflammation and fibrosis. Modifies the transcription profile and thereby attenuates pathological remodeling in response to cardiac stress. Probably acts by competing with MEF2 transcription factors and TATA-binding proteins. This chain is Junctophilin-2, found in Rattus norvegicus (Rat).